A 234-amino-acid polypeptide reads, in one-letter code: Transcriptional activator protein TraR (234 aa).

The 66-residue stretch at 167–232 folds into the HTH luxR-type domain; that stretch reads TAEDAAWLDP…HLTALAIKRK (66 aa). The H-T-H motif DNA-binding region spans 191-210; the sequence is MEEIADVEEVKYNSVRVKLR.

This sequence belongs to the autoinducer-regulated transcriptional regulatory protein family.

Positive regulation of conjugal transfer of Ti plasmids. This Agrobacterium vitis (Rhizobium vitis) protein is Transcriptional activator protein TraR (traR).